The primary structure comprises 84 residues: U8-theraphotoxin-Hhn1g (84 aa).

The first 21 residues, 1 to 21 (MKVVLLVCLVWMMAMMELVSC), serve as a signal peptide directing secretion. 5 cysteine pairs are disulfide-bonded: C23–C35, C29–C44, C34–C67, C54–C75, and C69–C81.

Belongs to the AVIT (prokineticin) family. As to expression, expressed by the venom gland.

The protein localises to the secreted. The protein is U8-theraphotoxin-Hhn1g of Cyriopagopus hainanus (Chinese bird spider).